Consider the following 118-residue polypeptide: Ribonuclease P protein component (118 aa).

Belongs to the RnpA family. Consists of a catalytic RNA component (M1 or rnpB) and a protein subunit.

The catalysed reaction is Endonucleolytic cleavage of RNA, removing 5'-extranucleotides from tRNA precursor.. Functionally, RNaseP catalyzes the removal of the 5'-leader sequence from pre-tRNA to produce the mature 5'-terminus. It can also cleave other RNA substrates such as 4.5S RNA. The protein component plays an auxiliary but essential role in vivo by binding to the 5'-leader sequence and broadening the substrate specificity of the ribozyme. In Shewanella baltica (strain OS155 / ATCC BAA-1091), this protein is Ribonuclease P protein component.